Consider the following 453-residue polypeptide: Ribosomal protein uS12 methylthiotransferase RimO (453 aa).

Positions 5 to 120 constitute an MTTase N-terminal domain; sequence PKVGFVSLGC…VMQAVHSHLP (116 aa). Positions 14, 50, 79, 151, 155, and 158 each coordinate [4Fe-4S] cluster. In terms of domain architecture, Radical SAM core spans 137–382; the sequence is LTPRHYAYLK…MEVAEEVSAR (246 aa). The region spanning 385–453 is the TRAM domain; that stretch reads QRKVGKTLKV…ADGHDLWGEV (69 aa).

The protein belongs to the methylthiotransferase family. RimO subfamily. The cofactor is [4Fe-4S] cluster.

Its subcellular location is the cytoplasm. The catalysed reaction is L-aspartate(89)-[ribosomal protein uS12]-hydrogen + (sulfur carrier)-SH + AH2 + 2 S-adenosyl-L-methionine = 3-methylsulfanyl-L-aspartate(89)-[ribosomal protein uS12]-hydrogen + (sulfur carrier)-H + 5'-deoxyadenosine + L-methionine + A + S-adenosyl-L-homocysteine + 2 H(+). In terms of biological role, catalyzes the methylthiolation of an aspartic acid residue of ribosomal protein uS12. The sequence is that of Ribosomal protein uS12 methylthiotransferase RimO from Burkholderia vietnamiensis (strain G4 / LMG 22486) (Burkholderia cepacia (strain R1808)).